Here is a 408-residue protein sequence, read N- to C-terminus: Succinylornithine transaminase (408 aa).

Residue K252 is modified to N6-(pyridoxal phosphate)lysine.

The protein belongs to the class-III pyridoxal-phosphate-dependent aminotransferase family. AstC subfamily. It depends on pyridoxal 5'-phosphate as a cofactor.

The catalysed reaction is N(2)-succinyl-L-ornithine + 2-oxoglutarate = N-succinyl-L-glutamate 5-semialdehyde + L-glutamate. It participates in amino-acid degradation; L-arginine degradation via AST pathway; L-glutamate and succinate from L-arginine: step 3/5. Catalyzes the transamination of N(2)-succinylornithine and alpha-ketoglutarate into N(2)-succinylglutamate semialdehyde and glutamate. Can also act as an acetylornithine aminotransferase. This is Succinylornithine transaminase from Salmonella paratyphi A (strain ATCC 9150 / SARB42).